The following is a 1304-amino-acid chain: Neuronal cell adhesion molecule (1304 aa).

Positions 1–24 (MQLKIMPKKKRLSAGRVPLILFLC) are cleaved as a signal peptide. Residues 25–1167 (QMISALEVPL…ASRQVDIATQ (1143 aa)) are Extracellular-facing. 2 consecutive Ig-like domains span residues 46 to 134 (PTIT…AAVS) and 141 to 235 (PSRS…QPIS). Disulfide bonds link Cys-68–Cys-123 and Cys-167–Cys-218. An N-linked (GlcNAc...) asparagine glycan is attached at Asn-83. N-linked (GlcNAc...) asparagine glycosylation is found at Asn-223, Asn-245, Asn-251, Asn-276, and Asn-314. 4 consecutive Ig-like domains span residues 267 to 356 (PPTF…ISVR), 361 to 448 (PYWI…AFVN), 454 to 541 (PRIL…VHLE), and 545 to 632 (PTWI…AVLS). Disulfide bonds link Cys-292–Cys-340 and Cys-382–Cys-432. Asn-433 and Asn-507 each carry an N-linked (GlcNAc...) asparagine glycan. 2 disulfide bridges follow: Cys-476–Cys-525 and Cys-567–Cys-616. N-linked (GlcNAc...) asparagine glycosylation is found at Asn-619, Asn-716, and Asn-802. Fibronectin type-III domains follow at residues 649 to 744 (PPFD…TKAS), 746 to 843 (PDKN…SGED), 848 to 950 (APGN…TPEG), 954 to 1051 (APSS…VDEA), and 1064 to 1156 (QAVN…TGPA). The N-linked (GlcNAc...) (complex) asparagine glycan is linked to Asn-858. 6 N-linked (GlcNAc...) asparagine glycosylation sites follow: Asn-993, Asn-1009, Asn-1019, Asn-1072, Asn-1083, and Asn-1115. Residues 1168–1190 (GWFIGLMCAVALLILILLIVCFI) form a helical membrane-spanning segment. Over 1191–1304 (RRNKGGKYPV…SPVNAMNSFV (114 aa)) the chain is Cytoplasmic. The span at 1199-1219 (PVKEKEDAHADPEIQPMKEDD) shows a compositional bias: basic and acidic residues. Positions 1199-1304 (PVKEKEDAHA…SPVNAMNSFV (106 aa)) are disordered. Phosphothreonine is present on Thr-1221. A Phosphotyrosine modification is found at Tyr-1225. At Ser-1226 the chain carries Phosphoserine. Positions 1241–1250 (PSDRTVKKED) are enriched in basic and acidic residues. Phosphoserine occurs at positions 1251, 1254, 1271, 1290, 1291, and 1295. The segment covering 1288–1304 (NESSEAPSPVNAMNSFV) has biased composition (polar residues).

The protein belongs to the immunoglobulin superfamily. L1/neurofascin/NgCAM family. As to quaternary structure, constituent of a NFASC/NRCAM/ankyrin-G complex. Detected in a complex with CNTN1 and PTPRB. Interacts with GLDN/gliomedin. Interacts with MYOC. Detected in all the examined tissues. In the brain it was detected in the amygdala, caudate nucleus, corpus callosum, hippocampus, hypothalamus, substantia nigra, subthalamic nucleus and thalamus.

The protein resides in the cell membrane. It is found in the cell projection. Its subcellular location is the axon. The protein localises to the secreted. Functionally, cell adhesion protein that is required for normal responses to cell-cell contacts in brain and in the peripheral nervous system. Plays a role in neurite outgrowth in response to contactin binding. Plays a role in mediating cell-cell contacts between Schwann cells and axons. Plays a role in the formation and maintenance of the nodes of Ranvier on myelinated axons. Nodes of Ranvier contain clustered sodium channels that are crucial for the saltatory propagation of action potentials along myelinated axons. During development, nodes of Ranvier are formed by the fusion of two heminodes. Required for normal clustering of sodium channels at heminodes; not required for the formation of mature nodes with normal sodium channel clusters. Required, together with GLDN, for maintaining NFASC and sodium channel clusters at mature nodes of Ranvier. The sequence is that of Neuronal cell adhesion molecule (NRCAM) from Homo sapiens (Human).